Here is a 141-residue protein sequence, read N- to C-terminus: MVRSQLPVAAPLRLLCALLLLPSATMIPGGLSPRSVTDPDVQEAAAFSVQEYNALSANAYYYKELRIVEAQSQVVSGAKYYLTMELMKTKCAKATSKPKVYKEIQNCELPPKAQQEKLTCHFQVWSRPWLEKMELTKMSCN.

The first 26 residues, 1-26 (MVRSQLPVAAPLRLLCALLLLPSATM), serve as a signal peptide directing secretion. The 101-residue stretch at 29 to 129 (GGLSPRSVTD…CHFQVWSRPW (101 aa)) folds into the Cystatin domain. A Secondary area of contact motif is present at residues 73–77 (QVVSG). Disulfide bonds link cysteine 91/cysteine 107 and cysteine 120/cysteine 140.

It belongs to the cystatin family. In terms of tissue distribution, expressed at a low level by the venom gland (at protein level).

It localises to the secreted. Inhibits various C1 cysteine proteases including cathepsin L, papain and cathepsin B. This protein has no toxic activity and its function in the venom is unknown. It may play a role as a housekeeping or regulatory protein. In Micropechis ikaheca (New Guinean small-eyed snake), this protein is Cystatin.